Consider the following 243-residue polypeptide: Leucyl/phenylalanyl-tRNA--protein transferase (243 aa).

The segment at 1-22 is disordered; the sequence is MHSQPYLLSPTPNTPFPPAEHA.

It belongs to the L/F-transferase family.

The protein localises to the cytoplasm. The catalysed reaction is N-terminal L-lysyl-[protein] + L-leucyl-tRNA(Leu) = N-terminal L-leucyl-L-lysyl-[protein] + tRNA(Leu) + H(+). It catalyses the reaction N-terminal L-arginyl-[protein] + L-leucyl-tRNA(Leu) = N-terminal L-leucyl-L-arginyl-[protein] + tRNA(Leu) + H(+). It carries out the reaction L-phenylalanyl-tRNA(Phe) + an N-terminal L-alpha-aminoacyl-[protein] = an N-terminal L-phenylalanyl-L-alpha-aminoacyl-[protein] + tRNA(Phe). Functions in the N-end rule pathway of protein degradation where it conjugates Leu, Phe and, less efficiently, Met from aminoacyl-tRNAs to the N-termini of proteins containing an N-terminal arginine or lysine. This chain is Leucyl/phenylalanyl-tRNA--protein transferase, found in Xylella fastidiosa (strain M23).